Reading from the N-terminus, the 322-residue chain is Solute carrier family 35 member B1 (322 aa).

The next 8 helical transmembrane spans lie at 12 to 32 (LRLP…GILQ), 51 to 71 (FALT…KILI), 85 to 105 (WLYA…NSAL), 136 to 156 (YPLA…LFMY), 168 to 188 (TVGF…LTGV), 210 to 230 (LWST…WEFL), 243 to 263 (ILLF…TVVY), and 285 to 305 (VILF…LVFL). Positions 318–322 (KKTSH) match the Di-lysine motif motif.

The protein belongs to the nucleotide-sugar transporter family. SLC35B subfamily.

The protein localises to the endoplasmic reticulum membrane. The enzyme catalyses ADP(in) + ATP(out) = ADP(out) + ATP(in). It catalyses the reaction UDP(out) + ATP(in) = UDP(in) + ATP(out). The catalysed reaction is UTP(out) + ATP(in) = UTP(in) + ATP(out). It carries out the reaction dATP(out) + ATP(in) = dATP(in) + ATP(out). ATP:ADP antiporter that catalyzes the exchange of ATP and ADP across the endoplasmic reticulum (ER) membrane. Imports ATP from the cytosol to the ER lumen and exports ADP in the opposite direction. Regulates ER energy metabolism and protein biogenesis. Appears to be part of a calcium-dependent ER to cytosol low energy response axis, where calcium efflux from ER to the cytosol triggers ATP import into the ER lumen to maintain sufficient ATP supply. Provides ATP to ER chaperone HSPA5 that drives protein folding and trafficking in the ER. Can transport dATP, UTP or UDP in exchange for ATP, but the physiological relevance of this process remains to be established. This chain is Solute carrier family 35 member B1 (Slc35b1), found in Rattus norvegicus (Rat).